Here is a 654-residue protein sequence, read N- to C-terminus: Fructose-1,6-bisphosphatase class 3 (654 aa).

Belongs to the FBPase class 3 family. Requires Mn(2+) as cofactor.

It carries out the reaction beta-D-fructose 1,6-bisphosphate + H2O = beta-D-fructose 6-phosphate + phosphate. Its pathway is carbohydrate biosynthesis; gluconeogenesis. The chain is Fructose-1,6-bisphosphatase class 3 from Staphylococcus haemolyticus (strain JCSC1435).